A 233-amino-acid polypeptide reads, in one-letter code: Ribosome maturation factor RimP (233 aa).

A compositionally biased stretch (basic and acidic residues) spans 167-179 (RGKAAEREKKRDL). The tract at residues 167–233 (RGKAAEREKK…RARRGEIDPD (67 aa)) is disordered. Positions 187 to 196 (PHAKPAAQAK) are enriched in low complexity. Basic and acidic residues predominate over residues 220 to 233 (LAADRARRGEIDPD).

This sequence belongs to the RimP family.

It localises to the cytoplasm. In terms of biological role, required for maturation of 30S ribosomal subunits. In Bradyrhizobium sp. (strain ORS 278), this protein is Ribosome maturation factor RimP.